Here is a 114-residue protein sequence, read N- to C-terminus: Phosphoribosyl-ATP pyrophosphatase (114 aa).

Belongs to the PRA-PH family.

Its subcellular location is the cytoplasm. It carries out the reaction 1-(5-phospho-beta-D-ribosyl)-ATP + H2O = 1-(5-phospho-beta-D-ribosyl)-5'-AMP + diphosphate + H(+). The protein operates within amino-acid biosynthesis; L-histidine biosynthesis; L-histidine from 5-phospho-alpha-D-ribose 1-diphosphate: step 2/9. This chain is Phosphoribosyl-ATP pyrophosphatase, found in Leuconostoc mesenteroides subsp. mesenteroides (strain ATCC 8293 / DSM 20343 / BCRC 11652 / CCM 1803 / JCM 6124 / NCDO 523 / NBRC 100496 / NCIMB 8023 / NCTC 12954 / NRRL B-1118 / 37Y).